The sequence spans 319 residues: MTYARIAKSSRYLSEFAVSNDDLSQIMETSDEWIKTRTGISSRRISQQENTSDLAIQVAKQLLAGEDPAGVDLIIVATMSPDAYTPATAALVQAAVGAENAACFDLSAACSGFVYALDVAEKMLRRPGGMALVIGAETLSKLVDWQDRTTAVLFGDGAGGVLVKNDALEPHFLASQLKSYGHLAKFLSAGQTSPQPFPGPVTDLAPFKMNGREVYKFATHKVPEVITACLEEAGVGLAEVDLFLLHQANYRIVKQVARRLDLPEEKFPCNIAEYGNTSAASEAILLAELAEEGKAQAGDLVVLAGFGGGLTAAAQLVRL.

Active-site residues include cysteine 110 and histidine 246. An ACP-binding region spans residues 247 to 251 (QANYR). The active site involves asparagine 276.

The protein belongs to the thiolase-like superfamily. FabH family. Homodimer.

The protein localises to the cytoplasm. The catalysed reaction is malonyl-[ACP] + acetyl-CoA + H(+) = 3-oxobutanoyl-[ACP] + CO2 + CoA. The protein operates within lipid metabolism; fatty acid biosynthesis. Catalyzes the condensation reaction of fatty acid synthesis by the addition to an acyl acceptor of two carbons from malonyl-ACP. Catalyzes the first condensation reaction which initiates fatty acid synthesis and may therefore play a role in governing the total rate of fatty acid production. Possesses both acetoacetyl-ACP synthase and acetyl transacylase activities. Its substrate specificity determines the biosynthesis of branched-chain and/or straight-chain of fatty acids. In Lactobacillus delbrueckii subsp. bulgaricus (strain ATCC 11842 / DSM 20081 / BCRC 10696 / JCM 1002 / NBRC 13953 / NCIMB 11778 / NCTC 12712 / WDCM 00102 / Lb 14), this protein is Beta-ketoacyl-[acyl-carrier-protein] synthase III.